The sequence spans 387 residues: Lymphocyte transmembrane adapter 1 (387 aa).

Topologically, residues 1–37 (MDVTTSAWSETTRRISEPSTLQGTLGSLDKAEDHSSS) are extracellular. The helical; Signal-anchor for type III membrane protein transmembrane segment at 38-58 (IFSGFAALLAILLVVAVICVL) threads the bilayer. Topologically, residues 59 to 387 (WCCGKRKKRQ…VCAAEAGARG (329 aa)) are cytoplasmic. The segment at 114–136 (VSTESLLSRNSDSPSSEHVPSRA) is disordered. Positions 118–129 (SLLSRNSDSPSS) are enriched in low complexity. Y195 carries the post-translational modification Phosphotyrosine. The disordered stretch occupies residues 230–268 (SEEIDEGCGNASDCTSLGSPGTENSDPLSDGEGSSQTSN). The segment covering 241 to 268 (SDCTSLGSPGTENSDPLSDGEGSSQTSN) has biased composition (polar residues). Phosphotyrosine occurs at positions 270 and 296. Positions 294-387 (RDYENVPPGP…VCAAEAGARG (94 aa)) are disordered. Residues 319–329 (DHVEGRTDGPE) are compositionally biased toward basic and acidic residues. Residues 360-369 (PWEDAEETSS) are compositionally biased toward acidic residues. At Y375 the chain carries Phosphotyrosine.

When phosphorylated, interacts with GRB2, PIK3R1 and GRAP2. Post-translationally, phosphorylated on tyrosines upon TCR or BCR activation; which leads to the recruitment of GRB2, PIK3R1 and GRAP2.

The protein localises to the cell membrane. Its function is as follows. Negatively regulates TCR (T-cell antigen receptor)-mediated signaling in T-cells and BCR (B-cell antigen receptor)-mediated signaling in B-cells. The polypeptide is Lymphocyte transmembrane adapter 1 (LAX1) (Bos taurus (Bovine)).